The primary structure comprises 888 residues: Serine/threonine-protein phosphatase 1 regulatory subunit 10 (888 aa).

Residues 1–348 are interaction with TOX4; the sequence is MGSGPIDPKE…EPAPPAEPMD (348 aa). Positions 73-147 constitute a TFIIS N-terminal domain; that stretch reads KLLNNWLTYS…SDWMAVIRSQ (75 aa). Disordered stretches follow at residues 147–213, 247–270, 306–400, and 534–853; these read QSST…STGL, SATA…NTAP, KKKK…KTVT, and VETL…HGGD. Composition is skewed to basic and acidic residues over residues 153–166 and 174–196; these read AEKD…EGKS and PLTE…EKPK. Lys179 participates in a covalent cross-link: Glycyl lysine isopeptide (Lys-Gly) (interchain with G-Cter in SUMO2). Residues 248-258 show a composition bias toward low complexity; it reads ATAAPGDAAPP. Lys262 is covalently cross-linked (Glycyl lysine isopeptide (Lys-Gly) (interchain with G-Cter in SUMO2)). Ser313 is modified (phosphoserine). A compositionally biased stretch (polar residues) spans 325–334; it reads KTSTEQSTAK. Residue Ser382 is modified to Phosphoserine. Residues 388-417 are necessary for interaction with PPP1CA; the sequence is QLTRKGRKRKTVTWPEEGKLREYFYFELDE. The segment at 393-408 is necessary for interaction with PPP1CC; sequence GRKRKTVTWPEEGKLR. The short motif at 394-423 is the PP1-binding motif element; that stretch reads RKRKTVTWPEEGKLREYFYFELDETERVNV. Phosphothreonine is present on Thr398. Residues 418–619 are interaction with WDR82; sequence TERVNVNKIK…LKQMLVPHGL (202 aa). Residues 540 to 551 show a composition bias toward gly residues; the sequence is GGSGGSPDGAGG. 2 positions are modified to phosphoserine: Ser545 and Ser591. The segment covering 583 to 595 has biased composition (polar residues); sequence EILTSIMGSPNSH. Basic and acidic residues predominate over residues 596–611; the sequence is PSEELLKQPDYSDKLK. A compositionally biased stretch (pro residues) spans 644–655; sequence PPGPGGPMPGPH. The residue at position 665 (Arg665) is an Omega-N-methylarginine. The span at 674–690 shows a compositional bias: low complexity; sequence RGGDPFWDGPGDPMRGG. Arg693 and Arg737 each carry omega-N-methylarginine. Composition is skewed to gly residues over residues 724–762 and 784–794; these read ARGG…GSMG and GPGGNMGGSGG. Basic and acidic residues predominate over residues 811–851; sequence PHDVPSHRGHDHRGPPPHEHRGHDGHGGGGHRGHDGGHSHG. Residues 854–882 form a C3H1-type zinc finger; the sequence is MSNRPVCRHFMMKGNCRYENNCAFYHPGV.

In terms of assembly, component of the PNUTS-PP1 complex (also named PTW/PP1 complex), composed of PPP1R10/PNUTS, TOX4, WDR82, and PPP1CA (or PPP1CB or PPP1CC). Post-translationally, phosphorylated on Ser-398 by PKA within the region necessary for interaction with PPP1CA.

It is found in the nucleus. Its subcellular location is the chromosome. In terms of biological role, substrate-recognition component of the PNUTS-PP1 protein phosphatase complex, a protein phosphatase 1 (PP1) complex that promotes RNA polymerase II transcription pause-release, allowing transcription elongation. Promoter-proximal pausing by RNA polymerase II is a transcription halt following transcription initiation but prior to elongation, which acts as a checkpoint to control that transcripts are favorably configured for transcriptional elongation. The PNUTS-PP1 complex mediates the release of RNA polymerase II from promoter-proximal region of genes by catalyzing dephosphorylation of proteins involved in transcription, such as AFF4, CDK9, MEPCE, INTS12, NCBP1, POLR2M/GDOWN1 and SUPT6H. The PNUTS-PP1 complex also regulates RNA polymerase II transcription termination by mediating dephosphorylation of SUPT5H in termination zones downstream of poly(A) sites, thereby promoting deceleration of RNA polymerase II transcription. PNUTS-PP1 complex is also involved in the response to replication stress by mediating dephosphorylation of POLR2A at 'Ser-5' of the CTD, promoting RNA polymerase II degradation. The PNUTS-PP1 complex also plays a role in the control of chromatin structure and cell cycle progression during the transition from mitosis into interphase. PNUTS-PP1 complex mediates dephosphorylation of MYC, promoting MYC stability by preventing MYC ubiquitination by the SCF(FBXW7) complex. In addition to acts as a substrate-recognition component, PPP1R10/PNUTS also acts as a nuclear targeting subunit for the PNUTS-PP1 complex. In some context, PPP1R10/PNUTS also acts as an inhibitor of protein phosphatase 1 (PP1) activity by preventing access to substrates, such as RB. In Mus musculus (Mouse), this protein is Serine/threonine-protein phosphatase 1 regulatory subunit 10.